A 350-amino-acid polypeptide reads, in one-letter code: Sperm equatorial segment protein 1 (350 aa).

The N-terminal stretch at 1 to 19 (MKPLVLLVALLLWPSSVPA) is a signal peptide. Asn-128 carries N-linked (GlcNAc...) asparagine glycosylation.

Belongs to the SPESP1 family. In terms of processing, glycosylated. In testis there are two predominant forms of 77- and 67-kDa and a form of 47-kDa, whereas in epididymal sperm from caput, corpus, and cauda there are two forms of 47- and 43-kDa. Testis forms contain complex carbohydrate residues. Epididymal sperm forms are N-glycosylated. Then undergoes significant glycosylation in the testis and that the majority of these glycoconjugates are removed by the time sperm reach the caput epididymis. As to expression, highly expressed in testis, where it is localized in the acrosome of postmeiotic stages of spermiogenesis (round and elongating spermatids and in ejaculated spermatozoa) (at protein level). Poorly expressed in placenta and fetal lung.

The protein localises to the cytoplasmic vesicle. It is found in the secretory vesicle. It localises to the acrosome. Functionally, involved in fertilization ability of sperm. This Homo sapiens (Human) protein is Sperm equatorial segment protein 1.